Consider the following 298-residue polypeptide: Heterogeneous nuclear ribonucleoprotein C (298 aa).

Ala-2 bears the N-acetylalanine mark. Glycyl lysine isopeptide (Lys-Gly) (interchain with G-Cter in SUMO2) cross-links involve residues Lys-8, Lys-50, Lys-89, and Lys-94. An RRM domain is found at 16 to 87 (SRVFIGNLNT…QVLDINLAAE (72 aa)). Ser-108 bears the Phosphoserine mark. Disordered stretches follow at residues 131 to 177 (PPPP…VKGD) and 204 to 298 (EKEQ…EDDS). The short motif at 142 to 148 (PSKRQRV) is the Nuclear localization signal element. 2 positions are modified to phosphoserine: Ser-149 and Ser-153. The span at 162-173 (SKSGQRGSSSKS) shows a compositional bias: low complexity. Lys-163 is modified (N6-acetyllysine; alternate). Lys-163 participates in a covalent cross-link: Glycyl lysine isopeptide (Lys-Gly) (interchain with G-Cter in SUMO2); alternate. Positions 176 to 211 (GDDLQAIKKELTQIKQKVDSLLESLEKIEKEQSKQA) form a coiled coil. A Glycyl lysine isopeptide (Lys-Gly) (interchain with G-Cter in SUMO2) cross-link involves residue Lys-209. 3 positions are modified to phosphoserine: Ser-214, Ser-216, and Ser-217. A Glycyl lysine isopeptide (Lys-Gly) (interchain with G-Cter in SUMO2) cross-link involves residue Lys-222. Lys-225 is covalently cross-linked (Glycyl lysine isopeptide (Lys-Gly) (interchain with G-Cter in SUMO2); alternate). Lys-225 participates in a covalent cross-link: Glycyl lysine isopeptide (Lys-Gly) (interchain with G-Cter in SUMO1); alternate. Ser-226, Ser-231, Ser-232, and Ser-234 each carry phosphoserine. Positions 235-246 (VKKDETNVKMES) are enriched in basic and acidic residues. Residues Lys-236 and Lys-237 each participate in a glycyl lysine isopeptide (Lys-Gly) (interchain with G-Cter in SUMO2) cross-link. Residue Lys-243 forms a Glycyl lysine isopeptide (Lys-Gly) (interchain with G-Cter in SUMO2); alternate linkage. Residue Lys-243 forms a Glycyl lysine isopeptide (Lys-Gly) (interchain with G-Cter in SUMO); alternate linkage. Phosphoserine occurs at positions 246 and 253. Residues 248–269 (AGADDSAEEGDLLDDDDNEDRG) show a composition bias toward acidic residues. Basic and acidic residues predominate over residues 270 to 279 (DDQLELKDDE). Residues 280–298 (KEPEEGEDDRDSANGEDDS) are compositionally biased toward acidic residues. Phosphoserine is present on residues Ser-291 and Ser-298.

This sequence belongs to the RRM HNRPC family. RALY subfamily. Tetramer composed of 3 copies of isoform C1 and 1 copy of isoform C2. Assembly of 3 tetramers with bound pre-mRNA gives rise to a 19S complex that interacts with HNRNPA2B1 tetramers. Component of the 40S hnRNP particle. Identified in the spliceosome C complex. Interacts with IGF2BP1. Interacts with PPIA/CYPA. Post-translationally, phosphorylated on Ser-253 and Ser-291 in resting cells. In terms of processing, sumoylated. Sumoylation reduces affinity for mRNA. Ubiquitinated and degraded after nucleo-cytoplasmic transport by YWHAE.

The protein resides in the nucleus. Functionally, binds pre-mRNA and nucleates the assembly of 40S hnRNP particles. Interacts with poly-U tracts in the 3'-UTR or 5'-UTR of mRNA and modulates the stability and the level of translation of bound mRNA molecules. Single HNRNPC tetramers bind 230-240 nucleotides. Trimers of HNRNPC tetramers bind 700 nucleotides. May play a role in the early steps of spliceosome assembly and pre-mRNA splicing. N6-methyladenosine (m6A) has been shown to alter the local structure in mRNAs and long non-coding RNAs (lncRNAs) via a mechanism named 'm(6)A-switch', facilitating binding of HNRNPC, leading to regulation of mRNA splicing. This chain is Heterogeneous nuclear ribonucleoprotein C, found in Rattus norvegicus (Rat).